Consider the following 149-residue polypeptide: Deoxyuridine 5'-triphosphate nucleotidohydrolase (149 aa).

Residues 68–70 (RSG), Asn-81, 85–87 (LID), and Met-95 each bind substrate.

The protein belongs to the dUTPase family. The cofactor is Mg(2+).

The enzyme catalyses dUTP + H2O = dUMP + diphosphate + H(+). It functions in the pathway pyrimidine metabolism; dUMP biosynthesis; dUMP from dCTP (dUTP route): step 2/2. Its function is as follows. This enzyme is involved in nucleotide metabolism: it produces dUMP, the immediate precursor of thymidine nucleotides and it decreases the intracellular concentration of dUTP so that uracil cannot be incorporated into DNA. This is Deoxyuridine 5'-triphosphate nucleotidohydrolase from Albidiferax ferrireducens (strain ATCC BAA-621 / DSM 15236 / T118) (Rhodoferax ferrireducens).